A 253-amino-acid chain; its full sequence is MTFQQHTPALRTGGFTFKQFFVAHDRCAMKVGTDGVLLGAWVPLREETRILDIGCGSGLLGLMLAQRSGGRFPIDGVELDAAASTQAADNAAASPWADCIRIYPADIVGYAQTATRRYSLIVSNPPYFSPGVDCASAQRAQARYTTTLTHDALLDCAGRLLEPDGRFCVVLPAVSAEDFLALAQRSAWRADIRVDVADSASRPVNRVLLSLRRGGESEINAIALSRTSLIIRDDDRRYSSSFQALTRDFYLSM.

The protein belongs to the methyltransferase superfamily. tRNA (adenine-N(6)-)-methyltransferase family.

The protein localises to the cytoplasm. The enzyme catalyses adenosine(37) in tRNA1(Val) + S-adenosyl-L-methionine = N(6)-methyladenosine(37) in tRNA1(Val) + S-adenosyl-L-homocysteine + H(+). Functionally, specifically methylates the adenine in position 37 of tRNA(1)(Val) (anticodon cmo5UAC). In Dickeya chrysanthemi (strain Ech1591) (Dickeya zeae (strain Ech1591)), this protein is tRNA1(Val) (adenine(37)-N6)-methyltransferase.